We begin with the raw amino-acid sequence, 472 residues long: Velvet complex subunit umv2 (472 aa).

4 stretches are compositionally biased toward basic and acidic residues: residues 1–10 (MSRSDTDGRD), 29–59 (SQRR…DSHG), 67–80 (YSRD…HRGD), and 89–105 (SYQR…EQER). Disordered stretches follow at residues 1–121 (MSRS…PLEA), 281–327 (CDDG…QFGG), and 433–472 (SQGI…EDDE). The segment covering 106–116 (SYGGASASRSS) has biased composition (low complexity). A Velvet domain is found at 158–441 (ENGRRYRLVV…ASQGIKIPVR (284 aa)). Positions 286-298 (RSSTHPQHASEST) are enriched in polar residues. Residues 456 to 466 (DGMGDYDGASG) show a composition bias toward gly residues.

Belongs to the velvet family. VelB subfamily. In terms of assembly, component of the heterotrimeric velvet complex composed of laeA, veA and velB; VeA acting as a bridging protein between laeA and velB. Forms a heterodimeric complex with vosA; the formation of the velB-vosA complex is light-dependent.

The protein resides in the nucleus. It is found in the cytoplasm. In terms of biological role, component of the velvet transcription factor complex that controls sexual/asexual developmental ratio in response to light, promoting sexual development in the darkness while stimulating asexual sporulation under illumination. The velvet complex acts as a global regulator for secondary metabolite gene expression. Component of the velB-VosA heterodimeric complex that plays a dual role in activating genes associated with spore maturation and repressing certain development-associated genes. The velB-VosA complex binds DNA through the DNA-binding domain of vosA that recognizes an 11-nucleotide consensus sequence 5'-CTGGCCGCGGC-3' consisting of two motifs in the promoters of key developmental regulatory genes. Required for full virulence on seedlings. The polypeptide is Velvet complex subunit umv2 (Mycosarcoma maydis (Corn smut fungus)).